A 188-amino-acid chain; its full sequence is Elongation factor P (188 aa).

It belongs to the elongation factor P family.

Its subcellular location is the cytoplasm. The protein operates within protein biosynthesis; polypeptide chain elongation. Involved in peptide bond synthesis. Stimulates efficient translation and peptide-bond synthesis on native or reconstituted 70S ribosomes in vitro. Probably functions indirectly by altering the affinity of the ribosome for aminoacyl-tRNA, thus increasing their reactivity as acceptors for peptidyl transferase. This chain is Elongation factor P, found in Rhodopseudomonas palustris (strain ATCC BAA-98 / CGA009).